A 105-amino-acid polypeptide reads, in one-letter code: Small ribosomal subunit protein uS10 (105 aa).

Belongs to the universal ribosomal protein uS10 family. Part of the 30S ribosomal subunit.

Involved in the binding of tRNA to the ribosomes. The polypeptide is Small ribosomal subunit protein uS10 (Cyanothece sp. (strain PCC 7425 / ATCC 29141)).